Consider the following 325-residue polypeptide: GMP reductase (325 aa).

The active-site Thioimidate intermediate is Cys174. Leu203–Val226 contributes to the NADP(+) binding site.

It belongs to the IMPDH/GMPR family. GuaC type 2 subfamily.

It catalyses the reaction IMP + NH4(+) + NADP(+) = GMP + NADPH + 2 H(+). Functionally, catalyzes the irreversible NADPH-dependent deamination of GMP to IMP. It functions in the conversion of nucleobase, nucleoside and nucleotide derivatives of G to A nucleotides, and in maintaining the intracellular balance of A and G nucleotides. This is GMP reductase from Pediococcus pentosaceus (strain ATCC 25745 / CCUG 21536 / LMG 10740 / 183-1w).